The sequence spans 139 residues: MRTLWILAVLLVGVEGSLVQFETMIMKLAKRSGFFWYSFYGCYCGWGGHGLPQDPTDRCCFVHDCCYGKVTNCNPKTATYSYTEENDGIVCGGDDPCKKQVCECDRVAAMCFRDNKDTYDGDKYWKLPPQKCQEDPEPC.

The N-terminal stretch at 1–16 (MRTLWILAVLLVGVEG) is a signal peptide. 7 disulfides stabilise this stretch: Cys42–Cys132, Cys44–Cys60, Cys59–Cys111, Cys65–Cys139, Cys66–Cys104, Cys73–Cys97, and Cys91–Cys102. Ca(2+)-binding residues include Tyr43, Gly45, and Gly47. The active site involves His63. Asp64 provides a ligand contact to Ca(2+). Asp105 is a catalytic residue.

It belongs to the phospholipase A2 family. Group II subfamily. D49 sub-subfamily. In terms of assembly, homodimer. The cofactor is Ca(2+). Expressed by the venom gland.

Its subcellular location is the secreted. The enzyme catalyses a 1,2-diacyl-sn-glycero-3-phosphocholine + H2O = a 1-acyl-sn-glycero-3-phosphocholine + a fatty acid + H(+). In terms of biological role, snake venom phospholipase A2 (PLA2) that inhibits ADP-induced platelet aggregation. PLA2 catalyzes the calcium-dependent hydrolysis of the 2-acyl groups in 3-sn-phosphoglycerides. The protein is Acidic phospholipase A2 S1E6-c of Calloselasma rhodostoma (Malayan pit viper).